A 995-amino-acid polypeptide reads, in one-letter code: Polynucleotide 5'-hydroxyl-kinase NOL9 (995 aa).

Disordered regions lie at residues 18-173 (EQRE…SSMK) and 271-359 (IKVF…YEPP). Low complexity-rich tracts occupy residues 75 to 94 (TAGA…SSPS) and 110 to 129 (VNKS…KSAK). A compositionally biased stretch (acidic residues) spans 279 to 354 (EETDSDEDDI…DIFDTDDLDS (76 aa)). 639–646 (GGKGVGKS) contributes to the ATP binding site.

Belongs to the Clp1 family. NOL9/GRC3 subfamily.

The protein localises to the nucleus. It is found in the nucleolus. Its function is as follows. Polynucleotide 5'-kinase involved in rRNA processing. This chain is Polynucleotide 5'-hydroxyl-kinase NOL9, found in Drosophila melanogaster (Fruit fly).